The primary structure comprises 619 residues: Pentatricopeptide repeat-containing protein At3g22470, mitochondrial (619 aa).

Residues 1–28 constitute a mitochondrion transit peptide; that stretch reads MIQRLIPLNRKASNFTQILEKGTSLLHY. PPR repeat units lie at residues 69–103, 104–138, 139–173, 174–208, 209–243, 244–278, 279–313, 314–348, 349–383, 384–418, 419–453, 454–488, 489–523, 524–558, and 559–593; these read TPID…GIEH, DMYT…GYEP, DTIT…KQRP, DLVT…GFQP, DEVT…NIKA, SVVQ…GIKA, DVVT…NIIP, DVVT…GIAP, DTIT…GCEP, DIVT…GLIP, NTIT…GVPP, SVVT…RMTL, GIGI…GVKP, DVVT…GCTP, and DDFT…GFSA.

The protein belongs to the PPR family. P subfamily.

Its subcellular location is the mitochondrion. The protein is Pentatricopeptide repeat-containing protein At3g22470, mitochondrial of Arabidopsis thaliana (Mouse-ear cress).